Reading from the N-terminus, the 801-residue chain is N,N'-diacetylchitobiose phosphorylase (801 aa).

N-acetyl-alpha-D-glucosamine 1-phosphate is bound by residues Arg333, Arg343, Arg349, Asp350, Trp490, and Asp492. Asp492 functions as the Proton donor in the catalytic mechanism. Residues Asp492, Lys636, and Glu637 each contribute to the N-acetyl-D-glucosamine site. N-acetyl-alpha-D-glucosamine 1-phosphate is bound by residues Glu637, His644, Gln690, Thr709, and Gly710.

Belongs to the glycosyl hydrolase 94 family. In terms of assembly, homodimer.

The catalysed reaction is N,N'-diacetylchitobiose + phosphate = N-acetyl-alpha-D-glucosamine 1-phosphate + N-acetyl-D-glucosamine. Functionally, catalyzes the reversible phosphorolysis of chitobiose (N,N'-diacetylchitobiose or (GlcNAc)(2)) into N-acetyl-alpha-D-glucosamine 1-phosphate (GlcNAc-1-P) and N-acetyl-D-glucosamine (GlcNAc) with inversion of the anomeric configuration. In the synthetic reaction, is also active on glucose-1-phosphate with 10% activity as compared with that on GlcNAc-1-P. GlcNAc is the best acceptor substrate, but the enzyme can use aryl-beta-glycosides of GlcNAc as the acceptor substrate with 10-20% activities of GlcNAc. Shows no phosphorolytic activity on cellobiose. The protein is N,N'-diacetylchitobiose phosphorylase of Vibrio proteolyticus (Aeromonas proteolytica).